Here is a 97-residue protein sequence, read N- to C-terminus: Citrate lyase acyl carrier protein (97 aa).

An O-(phosphoribosyl dephospho-coenzyme A)serine modification is found at Ser-14.

This sequence belongs to the CitD family. In terms of assembly, oligomer with a subunit composition of (alpha,beta,gamma)6.

It localises to the cytoplasm. Its function is as follows. Covalent carrier of the coenzyme of citrate lyase. In Rhodopseudomonas palustris (strain BisA53), this protein is Citrate lyase acyl carrier protein.